The sequence spans 512 residues: GMP synthase [glutamine-hydrolyzing] (512 aa).

In terms of domain architecture, Glutamine amidotransferase type-1 spans 3 to 196; the sequence is NILILDFGSQ…VKHICQASET (194 aa). The Nucleophile role is filled by cysteine 80. Active-site residues include histidine 169 and glutamate 171. In terms of domain architecture, GMPS ATP-PPase spans 197–387; it reads WKIETIEKQL…LGLPDVLISR (191 aa). 225 to 231 contributes to the ATP binding site; it reads SGGVDSS.

In terms of assembly, homodimer.

It catalyses the reaction XMP + L-glutamine + ATP + H2O = GMP + L-glutamate + AMP + diphosphate + 2 H(+). It participates in purine metabolism; GMP biosynthesis; GMP from XMP (L-Gln route): step 1/1. Functionally, catalyzes the synthesis of GMP from XMP. The polypeptide is GMP synthase [glutamine-hydrolyzing] (Chlamydia caviae (strain ATCC VR-813 / DSM 19441 / 03DC25 / GPIC) (Chlamydophila caviae)).